We begin with the raw amino-acid sequence, 494 residues long: Glutamyl-tRNA(Gln) amidotransferase subunit A, mitochondrial (494 aa).

Residues lysine 79 and serine 160 each act as charge relay system in the active site. The active-site Acyl-ester intermediate is serine 184.

It belongs to the amidase family. GatA subfamily. Subunit of the heterotrimeric GatCAB amidotransferase (AdT) complex, composed of A, B and C subunits.

The protein resides in the mitochondrion. It catalyses the reaction L-glutamyl-tRNA(Gln) + L-glutamine + ATP + H2O = L-glutaminyl-tRNA(Gln) + L-glutamate + ADP + phosphate + H(+). Allows the formation of correctly charged Gln-tRNA(Gln) through the transamidation of misacylated Glu-tRNA(Gln) in the mitochondria. The reaction takes place in the presence of glutamine and ATP through an activated gamma-phospho-Glu-tRNA(Gln). The protein is Glutamyl-tRNA(Gln) amidotransferase subunit A, mitochondrial of Aedes aegypti (Yellowfever mosquito).